A 185-amino-acid chain; its full sequence is Ribosome-recycling factor (185 aa).

Positions 138–160 (AMDKAVKDGEVGEDEGARGEKEL) are disordered.

The protein belongs to the RRF family.

The protein localises to the cytoplasm. In terms of biological role, responsible for the release of ribosomes from messenger RNA at the termination of protein biosynthesis. May increase the efficiency of translation by recycling ribosomes from one round of translation to another. The protein is Ribosome-recycling factor of Micrococcus luteus (strain ATCC 4698 / DSM 20030 / JCM 1464 / CCM 169 / CCUG 5858 / IAM 1056 / NBRC 3333 / NCIMB 9278 / NCTC 2665 / VKM Ac-2230) (Micrococcus lysodeikticus).